We begin with the raw amino-acid sequence, 144 residues long: Large ribosomal subunit protein uL13 (144 aa).

It belongs to the universal ribosomal protein uL13 family. As to quaternary structure, part of the 50S ribosomal subunit.

In terms of biological role, this protein is one of the early assembly proteins of the 50S ribosomal subunit, although it is not seen to bind rRNA by itself. It is important during the early stages of 50S assembly. In Legionella pneumophila (strain Paris), this protein is Large ribosomal subunit protein uL13.